The chain runs to 643 residues: Protein THEMIS2 (643 aa).

CABIT stretches follow at residues 1–238 (MEPV…TASS) and 239–514 (RHVH…KAKG). The tract at residues 546–631 (EIQAPPPRPP…RQDLDDDEHD (86 aa)) is disordered. Position 593 is a phosphothreonine (threonine 593). Basic residues predominate over residues 609-619 (PAHRKGHRPAK). Tyrosine 632 is modified (phosphotyrosine).

Belongs to the themis family. Interacts with VAV1. Interacts with LAT. Interacts constitutively with GRB2, LYN and PLCG2; these interactions increase the activation of PLCG2 and its downstream pathways following B cell receptor stimulation. In terms of processing, phosphorylation at Tyr-632 is induced by LPS. Phosphorylated by Src kinases (Lck or Fyn) following BCR engagement. As to expression, expressed in different endometrial adenocarcinoma cell lines and various other cell lines apart from the prostate cell line LNCaP and the ovarian cancer cell line BG1.

It localises to the nucleus. The protein resides in the cytoplasm. In terms of biological role, may constitute a control point in macrophage inflammatory response, promoting LPS-induced TLR4-mediated TNF production. Determines the threshold for activation of B cells by low-affinity and low-avidity ligands via PLCG2 activation and its downstream pathways. The chain is Protein THEMIS2 from Homo sapiens (Human).